Reading from the N-terminus, the 156-residue chain is Transcription antitermination protein NusB (156 aa).

The protein belongs to the NusB family.

In terms of biological role, involved in transcription antitermination. Required for transcription of ribosomal RNA (rRNA) genes. Binds specifically to the boxA antiterminator sequence of the ribosomal RNA (rrn) operons. The chain is Transcription antitermination protein NusB from Bartonella tribocorum (strain CIP 105476 / IBS 506).